The following is a 427-amino-acid chain: MTQLEMAGQGRVTEEMKLCAEKEGVSPEFIRRGVEEGSIVVVRNNRHTGIAPLAIGKGLRTKVNANLGTSRDHVDLEMELEKVRICTKAGADALMDLSTGGEIRAIRQAIVNASTMAVGTVPIYAAAAEALNSRKSIMEMTADEMFQAIEENGEDGVDFITVHCGVTRESVGRIAAQGRLLGIVSRGGSITARWMDYNDAENPLYAQYDRLLEIARRYDMVLSLGDGLRPGCLADATDRGQVQELIILGELCRRARARDVQVMIEGPGHVPYPQIEANIALQKSLCEGAPFYVLGPLPTDIAPGYDHITAAIGGALAGAAGADFLCYVTPSEHLCLPNLDDVHEGIVASRIAAHIADIAKGYPGAMEKDILMAKYRSEFNWNGQIDLSVDPDRSRARLERSETAKEEGCTMCGDLCAIKLGKKKAPC.

Substrate-binding positions include Asn66, Met95, Tyr124, His163, Ser185 to Gly187, Asp226 to Arg229, and Glu265. His269 contributes to the Zn(2+) binding site. Tyr292 serves as a coordination point for substrate. Residue His333 coordinates Zn(2+). Cys409, Cys412, and Cys416 together coordinate [4Fe-4S] cluster.

The protein belongs to the ThiC family. As to quaternary structure, homodimer. The cofactor is [4Fe-4S] cluster.

It catalyses the reaction 5-amino-1-(5-phospho-beta-D-ribosyl)imidazole + S-adenosyl-L-methionine = 4-amino-2-methyl-5-(phosphooxymethyl)pyrimidine + CO + 5'-deoxyadenosine + formate + L-methionine + 3 H(+). It participates in cofactor biosynthesis; thiamine diphosphate biosynthesis. Catalyzes the synthesis of the hydroxymethylpyrimidine phosphate (HMP-P) moiety of thiamine from aminoimidazole ribotide (AIR) in a radical S-adenosyl-L-methionine (SAM)-dependent reaction. This chain is Phosphomethylpyrimidine synthase, found in Syntrophus aciditrophicus (strain SB).